We begin with the raw amino-acid sequence, 159 residues long: MNILIDNRQDKVDAINLEELVEKVIKTVLEVEEVIDNVEVSVSFVDNEEIRKLNKYYRGIDKPTDVLSFPLAEFEDTYGEVEEIEEDSEEVQPIGDIVISLEKALEQSMEYGHSFEREVAYLTAHSMLHLLGYDHETEEERKIMREKEEEVMARLNIGR.

Residues His125, His129, and His135 each contribute to the Zn(2+) site.

This sequence belongs to the endoribonuclease YbeY family. Requires Zn(2+) as cofactor.

It localises to the cytoplasm. In terms of biological role, single strand-specific metallo-endoribonuclease involved in late-stage 70S ribosome quality control and in maturation of the 3' terminus of the 16S rRNA. The chain is Endoribonuclease YbeY from Thermoanaerobacter pseudethanolicus (strain ATCC 33223 / 39E) (Clostridium thermohydrosulfuricum).